The sequence spans 765 residues: 5-methyltetrahydropteroyltriglutamate--homocysteine methyltransferase 1 (765 aa).

Residues K18 and N116 each contribute to the 5-methyltetrahydropteroyltri-L-glutamate site. 437–439 contributes to the L-homocysteine binding site; sequence IGS. Residues 437–439 and E490 contribute to the L-methionine site; that span reads IGS. Residues 521 to 522 and W567 contribute to the 5-methyltetrahydropteroyltri-L-glutamate site; that span reads RC. D605 lines the L-homocysteine pocket. L-methionine is bound at residue D605. The Zn(2+) site is built by H647, C649, H658, D662, and E671. The Proton donor role is filled by H701. C733 is a Zn(2+) binding site.

Belongs to the vitamin-B12 independent methionine synthase family. The cofactor is Zn(2+). As to expression, expressed in leaves, stems, flowers, siliques and seeds.

The protein localises to the cytoplasm. Its subcellular location is the cytosol. It carries out the reaction 5-methyltetrahydropteroyltri-L-glutamate + L-homocysteine = tetrahydropteroyltri-L-glutamate + L-methionine. Its pathway is amino-acid biosynthesis; L-methionine biosynthesis via de novo pathway; L-methionine from L-homocysteine (MetE route): step 1/1. In terms of biological role, catalyzes the transfer of a methyl group from 5-methyltetrahydrofolate to homocysteine resulting in methionine formation. The chain is 5-methyltetrahydropteroyltriglutamate--homocysteine methyltransferase 1 (MS1) from Arabidopsis thaliana (Mouse-ear cress).